A 220-amino-acid chain; its full sequence is Small ribosomal subunit protein uS3 (220 aa).

Positions 39 to 107 (IREHVEGRLK…RVHINISEIK (69 aa)) constitute a KH type-2 domain.

The protein belongs to the universal ribosomal protein uS3 family. Part of the 30S ribosomal subunit. Forms a tight complex with proteins S10 and S14.

In terms of biological role, binds the lower part of the 30S subunit head. Binds mRNA in the 70S ribosome, positioning it for translation. The sequence is that of Small ribosomal subunit protein uS3 from Shouchella clausii (strain KSM-K16) (Alkalihalobacillus clausii).